The following is a 514-amino-acid chain: Peptide chain release factor 3 (514 aa).

Positions 8 to 268 constitute a tr-type G domain; it reads KKRRTFAIIS…TFLKFAPEPH (261 aa). Residues 17-24, 85-89, and 139-142 contribute to the GTP site; these read SHPDAGKT, DTPGH, and NKLD.

It belongs to the TRAFAC class translation factor GTPase superfamily. Classic translation factor GTPase family. PrfC subfamily.

It localises to the cytoplasm. Increases the formation of ribosomal termination complexes and stimulates activities of RF-1 and RF-2. It binds guanine nucleotides and has strong preference for UGA stop codons. It may interact directly with the ribosome. The stimulation of RF-1 and RF-2 is significantly reduced by GTP and GDP, but not by GMP. The chain is Peptide chain release factor 3 from Streptococcus thermophilus (strain ATCC BAA-491 / LMD-9).